The primary structure comprises 198 residues: Proteasome subunit beta 1 (198 aa).

Residues 1 to 6 (MSGPGA) constitute a propeptide, removed in mature form; by autocatalysis. The active-site Nucleophile is threonine 7.

Belongs to the peptidase T1B family. In terms of assembly, the 20S proteasome core is composed of 14 alpha and 14 beta subunits that assemble into four stacked heptameric rings, resulting in a barrel-shaped structure. The two inner rings, each composed of seven catalytic beta subunits, are sandwiched by two outer rings, each composed of seven alpha subunits. The catalytic chamber with the active sites is on the inside of the barrel. Has a gated structure, the ends of the cylinder being occluded by the N-termini of the alpha-subunits. Is capped at one or both ends by the proteasome regulatory ATPase, PAN.

It localises to the cytoplasm. The catalysed reaction is Cleavage of peptide bonds with very broad specificity.. The formation of the proteasomal ATPase PAN-20S proteasome complex, via the docking of the C-termini of PAN into the intersubunit pockets in the alpha-rings, triggers opening of the gate for substrate entry. Interconversion between the open-gate and close-gate conformations leads to a dynamic regulation of the 20S proteasome proteolysis activity. In terms of biological role, component of the proteasome core, a large protease complex with broad specificity involved in protein degradation. This is Proteasome subunit beta 1 from Ignicoccus hospitalis (strain KIN4/I / DSM 18386 / JCM 14125).